The following is a 354-amino-acid chain: UDP-3-O-acylglucosamine N-acyltransferase (354 aa).

His258 serves as the catalytic Proton acceptor.

The protein belongs to the transferase hexapeptide repeat family. LpxD subfamily. Homotrimer.

The catalysed reaction is a UDP-3-O-[(3R)-3-hydroxyacyl]-alpha-D-glucosamine + a (3R)-hydroxyacyl-[ACP] = a UDP-2-N,3-O-bis[(3R)-3-hydroxyacyl]-alpha-D-glucosamine + holo-[ACP] + H(+). The protein operates within bacterial outer membrane biogenesis; LPS lipid A biosynthesis. Catalyzes the N-acylation of UDP-3-O-acylglucosamine using 3-hydroxyacyl-ACP as the acyl donor. Is involved in the biosynthesis of lipid A, a phosphorylated glycolipid that anchors the lipopolysaccharide to the outer membrane of the cell. This Sinorhizobium fredii (strain NBRC 101917 / NGR234) protein is UDP-3-O-acylglucosamine N-acyltransferase.